We begin with the raw amino-acid sequence, 361 residues long: Ribosomal RNA large subunit methyltransferase M (361 aa).

S-adenosyl-L-methionine-binding positions include Ser-187, 220–223 (CPGG), Asp-239, Asp-259, and Asp-276. The active-site Proton acceptor is Lys-305.

It belongs to the class I-like SAM-binding methyltransferase superfamily. RNA methyltransferase RlmE family. RlmM subfamily. In terms of assembly, monomer.

The protein resides in the cytoplasm. The catalysed reaction is cytidine(2498) in 23S rRNA + S-adenosyl-L-methionine = 2'-O-methylcytidine(2498) in 23S rRNA + S-adenosyl-L-homocysteine + H(+). Catalyzes the 2'-O-methylation at nucleotide C2498 in 23S rRNA. In Shewanella sp. (strain W3-18-1), this protein is Ribosomal RNA large subunit methyltransferase M.